The following is a 185-amino-acid chain: Protein FAM219A (185 aa).

The residue at position 1 (Met1) is an N-acetylmethionine. Residues 1–131 (MMEEIDRFQV…SRYSSSGYSS (131 aa)) are disordered. Ser47 bears the Phosphoserine mark. A compositionally biased stretch (basic and acidic residues) spans 52 to 61 (KLEKQRELAR). Residues 66–80 (KNGSMGSPVNQQPKK) are compositionally biased toward polar residues. Residues Ser72 and Ser102 each carry the phosphoserine modification. At Thr113 the chain carries Phosphothreonine. Phosphoserine occurs at positions 115 and 122. The span at 122–131 (SRYSSSGYSS) shows a compositional bias: low complexity.

It belongs to the FAM219 family.

The polypeptide is Protein FAM219A (FAM219A) (Homo sapiens (Human)).